The sequence spans 201 residues: MARGRKLTMSQSERYLGSSYSYGDSNGNSATDESELTEEDIWSHAVDHSPEMLESHGAWNTRDAVVRNGRVGGGLSLAFEDASSSPRIVHQIRGGGEGGGGGGGGGRVERQLASSAPVNVPDWSKIYRVNSVESIHESDEEEEEDSGMMMPPHEYLAKSQQRRSRKSGGGGSVFEGVGRTLKGRELRRVRDAIWSQTGFYG.

2 disordered regions span residues 1-39 (MARG…LTEE) and 134-178 (SIHE…EGVG). Residues 17-29 (GSSYSYGDSNGNS) show a composition bias toward low complexity.

It belongs to the senescence regulator S40 family.

The protein resides in the cytoplasm. This is Protein S40-5 from Arabidopsis thaliana (Mouse-ear cress).